Reading from the N-terminus, the 364-residue chain is Protein FAM81A (364 aa).

Coiled coils occupy residues 75–107, 158–189, and 261–287; these read FLEE…RDNI, NKEQ…VDLS, and ANER…QKRN. The disordered stretch occupies residues 281–300; that stretch reads EESQKRNAEGQRKPDEEKVH.

Belongs to the FAM81 family. In terms of assembly, interacts with DLG4/PSD-95, GRIN2B/GLUN2B and SYNGAP1; the interactions facilitate condensate formation. Expressed in most regions of the brain (at protein level).

Its subcellular location is the postsynaptic density. It localises to the cytoplasm. Its function is as follows. Facilitates the interaction and assembly of proteins within the postsynaptic density by promoting the condensation of postsynaptic proteins via liquid-liquid phase separation. Required for neuronal activity. Accumulation at the postsynaptic density results in enlargement of dendritic spines. The polypeptide is Protein FAM81A (Fam81a) (Mus musculus (Mouse)).